The following is a 332-amino-acid chain: Small ribosomal subunit biogenesis GTPase RsgA (332 aa).

In terms of domain architecture, CP-type G spans 103-259 (RQQLIAANLD…LIDTPGMREL (157 aa)). GTP is bound by residues 148–151 (TKVD) and 201–209 (GSSGAGKST). Positions 281, 286, 288, and 294 each coordinate Zn(2+).

The protein belongs to the TRAFAC class YlqF/YawG GTPase family. RsgA subfamily. In terms of assembly, monomer. Associates with 30S ribosomal subunit, binds 16S rRNA. It depends on Zn(2+) as a cofactor.

The protein localises to the cytoplasm. One of several proteins that assist in the late maturation steps of the functional core of the 30S ribosomal subunit. Helps release RbfA from mature subunits. May play a role in the assembly of ribosomal proteins into the subunit. Circularly permuted GTPase that catalyzes slow GTP hydrolysis, GTPase activity is stimulated by the 30S ribosomal subunit. The sequence is that of Small ribosomal subunit biogenesis GTPase RsgA from Xylella fastidiosa (strain M12).